We begin with the raw amino-acid sequence, 499 residues long: Cytochrome P450 71A9 (499 aa).

A helical membrane pass occupies residues 2–22 (ISFTVFVFLTLLFTLSLVKQL). A heme-binding site is contributed by Cys440.

Belongs to the cytochrome P450 family. The cofactor is heme.

It localises to the membrane. This is Cytochrome P450 71A9 (CYP71A9) from Glycine max (Soybean).